A 160-amino-acid chain; its full sequence is 6,7-dimethyl-8-ribityllumazine synthase (160 aa).

5-amino-6-(D-ribitylamino)uracil contacts are provided by residues Trp28, 59-61 (ALE), and 81-83 (CVI). (2S)-2-hydroxy-3-oxobutyl phosphate is bound at residue 86 to 87 (ET). The active-site Proton donor is the His89. Asn114 contributes to the 5-amino-6-(D-ribitylamino)uracil binding site. Arg128 provides a ligand contact to (2S)-2-hydroxy-3-oxobutyl phosphate.

The protein belongs to the DMRL synthase family.

The catalysed reaction is (2S)-2-hydroxy-3-oxobutyl phosphate + 5-amino-6-(D-ribitylamino)uracil = 6,7-dimethyl-8-(1-D-ribityl)lumazine + phosphate + 2 H2O + H(+). It participates in cofactor biosynthesis; riboflavin biosynthesis; riboflavin from 2-hydroxy-3-oxobutyl phosphate and 5-amino-6-(D-ribitylamino)uracil: step 1/2. Functionally, catalyzes the formation of 6,7-dimethyl-8-ribityllumazine by condensation of 5-amino-6-(D-ribitylamino)uracil with 3,4-dihydroxy-2-butanone 4-phosphate. This is the penultimate step in the biosynthesis of riboflavin. This chain is 6,7-dimethyl-8-ribityllumazine synthase, found in Corynebacterium jeikeium (strain K411).